A 149-amino-acid polypeptide reads, in one-letter code: Transcriptional repressor NrdR (149 aa).

A zinc finger lies at 3–34 (CPFCTAKDTKVIDSRLVGGGHQVRRRRECNDC). The ATP-cone domain occupies 49-139 (PRVIKQDGSR…VYRSFEDIRE (91 aa)).

Belongs to the NrdR family. Zn(2+) is required as a cofactor.

Functionally, negatively regulates transcription of bacterial ribonucleotide reductase nrd genes and operons by binding to NrdR-boxes. This chain is Transcriptional repressor NrdR, found in Pseudoalteromonas translucida (strain TAC 125).